The sequence spans 252 residues: 5-oxoprolinase subunit A (252 aa).

The protein belongs to the LamB/PxpA family. Forms a complex composed of PxpA, PxpB and PxpC.

It carries out the reaction 5-oxo-L-proline + ATP + 2 H2O = L-glutamate + ADP + phosphate + H(+). In terms of biological role, catalyzes the cleavage of 5-oxoproline to form L-glutamate coupled to the hydrolysis of ATP to ADP and inorganic phosphate. The protein is 5-oxoprolinase subunit A of Corynebacterium glutamicum (strain ATCC 13032 / DSM 20300 / JCM 1318 / BCRC 11384 / CCUG 27702 / LMG 3730 / NBRC 12168 / NCIMB 10025 / NRRL B-2784 / 534).